The primary structure comprises 268 residues: uncharacterized protein (268 aa).

The RING-type; degenerate zinc finger occupies 21 to 61 (CVICLQKDGLRAQLSPCGHDQFDYSCICRWMDQSLTCPICK).

The protein localises to the mitochondrion. Its subcellular location is the nucleus. This is an uncharacterized protein from Schizosaccharomyces pombe (strain 972 / ATCC 24843) (Fission yeast).